Reading from the N-terminus, the 1191-residue chain is Probable inositol polyphosphate 5-phosphatase C9G1.10c (1191 aa).

Composition is skewed to polar residues over residues 1-10 (MASRQGFSNV), 72-101 (QVSSTIGSSTGRKVSGSIQRLASNFKNPSN), 114-135 (SDSSESHVATPSSPTISNSFVS), 151-161 (SFQSSVQSTKG), and 181-193 (NFSSKAGSSSPIS). A disordered region spans residues 1–193 (MASRQGFSNV…SKAGSSSPIS (193 aa)). Position 195 is a phosphoserine (Ser-195). Disordered stretches follow at residues 205-281 (SQSP…PQPV), 294-334 (SQQL…DASL), and 355-425 (IPEK…SSSS). Pro residues predominate over residues 268–280 (TPPPIPSPRPPQP). Positions 302 to 311 (SPRKPPKPPL) are enriched in basic residues. Polar residues-rich tracts occupy residues 316–334 (TQRSSSPIENLATKSDASL), 367–382 (HTLSELSSPALTSENL), and 400–413 (LATNKPVSMPVSTE). Residues 414-425 (QSDPSVAASSSS) show a composition bias toward low complexity.

It belongs to the inositol 1,4,5-trisphosphate 5-phosphatase family.

It localises to the cytoplasm. In Schizosaccharomyces pombe (strain 972 / ATCC 24843) (Fission yeast), this protein is Probable inositol polyphosphate 5-phosphatase C9G1.10c.